A 351-amino-acid polypeptide reads, in one-letter code: Meiotically up-regulated gene 1 protein (351 aa).

It is found in the cytoplasm. In terms of biological role, required for correct meiotic chromosome segregation. The protein is Meiotically up-regulated gene 1 protein (mug1) of Schizosaccharomyces pombe (strain 972 / ATCC 24843) (Fission yeast).